A 580-amino-acid polypeptide reads, in one-letter code: Putative monoterpene synthase 8 (580 aa).

Residues 1–44 (MACTSNLSSLSKSWAVLDVPRGAPKATGLWLKRQFIFKTSRICM) constitute a chloroplast transit peptide. 5 residues coordinate Mg(2+): Asp333, Asp337, Asp478, Thr482, and Glu486. Residues 333–337 (DDIFD) carry the DDXXD motif motif.

This sequence belongs to the terpene synthase family. Tpsg subfamily. Monomer. Mg(2+) serves as cofactor. Mn(2+) is required as a cofactor. As to expression, confined to flowers.

Its subcellular location is the plastid. It localises to the chloroplast. The protein operates within secondary metabolite biosynthesis; terpenoid biosynthesis. Its function is as follows. Monoterpene synthase (mono-TPS) involved in the biosynthesis of monoterpenes natural products, constituent of coffee beverage aroma. This chain is Putative monoterpene synthase 8, found in Coffea arabica (Arabian coffee).